We begin with the raw amino-acid sequence, 157 residues long: Transcription antitermination protein NusB (157 aa).

The protein belongs to the NusB family.

Its function is as follows. Involved in transcription antitermination. Required for transcription of ribosomal RNA (rRNA) genes. Binds specifically to the boxA antiterminator sequence of the ribosomal RNA (rrn) operons. This Xylella fastidiosa (strain 9a5c) protein is Transcription antitermination protein NusB.